Reading from the N-terminus, the 837-residue chain is MAKAAASSSLEDLDLSGEEVQRLTSAFQDPEFRRMFSQYAEELTDPENRRRYEAEITALERERGVEVRFVHPEPGHVLRTSLDGARRCFVNVCSNALVGAPSSRPGSGGDRGAAPGSHWSLPYSLAPGREYAGRSSSRYMVYDVVFHPDALALARRHEGFRQMLDATALEAVEKQFGVKLDRRNAKTLKAKYKGTPEAAVLRTPLPGVIPARPDGEPKGPLPDFPYPYQYPAAPGPRAPSPPEAALQPAPTEPRYSVVQRHHVDLQDYRCSRDSAPSPVPHELVITIELPLLRSAEQAALEVTRKLLCLDSRKPDYRLRLSLPYPVDDGRGKAQFNKARRQLVVTLPVVLPAARREPAVAVAAAAPEESADRSGTDGQACASAREGEAGPARSRAEDGGHDTCVAGAAGSGVTTLGDPEVAPPPAAAGEERVPKPGEQDLSRHAGSPPGSVEEPSPGGENSPGGGGSPCLSSRSLAWGSSAGRESARGDSSVETREESEGTGGQRSACAMGGPGTKSGEPLCPPLLCNQDKETLTLLIQVPRIQPQSLQGDLNPLWYKLRFSAQDLVYSFFLQFAPENKLSTTEPVISISSNNAVIELAKSPESHGHWREWYYGVNNDSLEERLFVNEENVNEFLEEVLSSPFKQSMSLTPPLIEVLQVTDNKIQINAKLQECSNSDQLQGKEERVNEESHLTEKEYIEHCNTPTTDSDSSIAVKALQIDSFGLVTCFQQESLDVSQMILGKSQQPESKMQSEFIKEKSATCSNEEKDNLNESVITEEKETDGDHLSSLLNKTTVHNIPGFDSIKETNMQDGSVQVIKDHVTNCAFSFQNSLLYDLD.

4 disordered regions span residues 100-119 (APSS…GSHW), 205-224 (LPGV…LPDF), 230-249 (YPAA…LQPA), and 363-515 (AAAP…GPGT). A compositionally biased stretch (pro residues) spans 233-242 (APGPRAPSPP). The span at 428–442 (GEERVPKPGEQDLSR) shows a compositional bias: basic and acidic residues. Positions 445–459 (GSPPGSVEEPSPGGE) are enriched in low complexity. A phosphoserine mark is found at S461 and S467. Positions 484 to 498 (ESARGDSSVETREES) are enriched in basic and acidic residues. Phosphoserine occurs at positions 640, 641, and 773.

The protein belongs to the PIH1 family. Kintoun subfamily. As to quaternary structure, interacts with CFAP300. Interacts with DNAAF4. Interacts with DNAAF6/PIH1D3. Interacts with DNAI2 and HSPA1A.

It is found in the cytoplasm. It localises to the dynein axonemal particle. Functionally, required for cytoplasmic pre-assembly of axonemal dyneins, thereby playing a central role in motility in cilia and flagella. Involved in pre-assembly of dynein arm complexes in the cytoplasm before intraflagellar transport loads them for the ciliary compartment. The chain is Protein kintoun from Homo sapiens (Human).